Here is a 452-residue protein sequence, read N- to C-terminus: Probable mannose-6-phosphate isomerase (452 aa).

The Zn(2+) site is built by Q141, H143, E168, and H295. Residue R314 is part of the active site.

Belongs to the mannose-6-phosphate isomerase type 1 family. Zn(2+) serves as cofactor.

Its subcellular location is the cytoplasm. It carries out the reaction D-mannose 6-phosphate = D-fructose 6-phosphate. The protein operates within nucleotide-sugar biosynthesis; GDP-alpha-D-mannose biosynthesis; alpha-D-mannose 1-phosphate from D-fructose 6-phosphate: step 1/2. In terms of biological role, involved in the synthesis of the GDP-mannose and dolichol-phosphate-mannose required for a number of critical mannosyl transfer reactions. In Dictyostelium discoideum (Social amoeba), this protein is Probable mannose-6-phosphate isomerase (mpi).